We begin with the raw amino-acid sequence, 146 residues long: D-aminoacyl-tRNA deacylase (146 aa).

Positions G137–P138 match the Gly-cisPro motif, important for rejection of L-amino acids motif.

It belongs to the DTD family. As to quaternary structure, homodimer.

Its subcellular location is the cytoplasm. The enzyme catalyses glycyl-tRNA(Ala) + H2O = tRNA(Ala) + glycine + H(+). It catalyses the reaction a D-aminoacyl-tRNA + H2O = a tRNA + a D-alpha-amino acid + H(+). An aminoacyl-tRNA editing enzyme that deacylates mischarged D-aminoacyl-tRNAs. Also deacylates mischarged glycyl-tRNA(Ala), protecting cells against glycine mischarging by AlaRS. Acts via tRNA-based rather than protein-based catalysis; rejects L-amino acids rather than detecting D-amino acids in the active site. By recycling D-aminoacyl-tRNA to D-amino acids and free tRNA molecules, this enzyme counteracts the toxicity associated with the formation of D-aminoacyl-tRNA entities in vivo and helps enforce protein L-homochirality. The protein is D-aminoacyl-tRNA deacylase of Bacillus mycoides (strain KBAB4) (Bacillus weihenstephanensis).